The chain runs to 272 residues: Indole-3-glycerol phosphate synthase (272 aa).

This sequence belongs to the TrpC family.

The enzyme catalyses 1-(2-carboxyphenylamino)-1-deoxy-D-ribulose 5-phosphate + H(+) = (1S,2R)-1-C-(indol-3-yl)glycerol 3-phosphate + CO2 + H2O. It participates in amino-acid biosynthesis; L-tryptophan biosynthesis; L-tryptophan from chorismate: step 4/5. The polypeptide is Indole-3-glycerol phosphate synthase (Mycolicibacterium gilvum (strain PYR-GCK) (Mycobacterium gilvum (strain PYR-GCK))).